The primary structure comprises 235 residues: C-&gt;U-editing enzyme APOBEC-1 (235 aa).

The CMP/dCMP-type deaminase domain maps to 10–131; sequence GDATLRRRIK…MDQQHRQGLK (122 aa). His-60 contributes to the Zn(2+) binding site. Glu-62 (proton donor) is an active-site residue. Zn(2+)-binding residues include Cys-92 and Cys-95.

The protein belongs to the cytidine and deoxycytidylate deaminase family. As to quaternary structure, homodimer. Interacts with A1CF; form an mRNA editing complex. Interacts with RBM47; form an mRNA editing complex. Found in a complex with CELF2/CUGBP2 and A1CF. Interacts with HNRPAB. Interacts with SYNCRIP. Requires Zn(2+) as cofactor.

The protein localises to the cytoplasm. Its subcellular location is the nucleus. It carries out the reaction a cytidine in mRNA + H2O + H(+) = a uridine in mRNA + NH4(+). It catalyses the reaction cytidine(6666) in apoB mRNA + H2O + H(+) = uridine(6666) in apoB mRNA + NH4(+). In terms of biological role, cytidine deaminase catalyzing the cytidine to uridine postranscriptional editing of a variety of mRNAs. Form complexes with cofactors that confer differential editing activity and selectivity. Responsible for the postranscriptional editing of a CAA codon for Gln to a UAA codon for stop in the apolipoprotein B mRNA. Also involved in CGA (Arg) to UGA (Stop) editing in the NF1 mRNA. May also play a role in the epigenetic regulation of gene expression by participating in DNA demethylation. The polypeptide is C-&gt;U-editing enzyme APOBEC-1 (Monodelphis domestica (Gray short-tailed opossum)).